Consider the following 317-residue polypeptide: 4-hydroxy-3-methylbut-2-enyl diphosphate reductase (317 aa).

Cys-12 is a [4Fe-4S] cluster binding site. Residues His-41 and His-74 each contribute to the (2E)-4-hydroxy-3-methylbut-2-enyl diphosphate site. Dimethylallyl diphosphate-binding residues include His-41 and His-74. 2 residues coordinate isopentenyl diphosphate: His-41 and His-74. Cys-96 contributes to the [4Fe-4S] cluster binding site. His-124 provides a ligand contact to (2E)-4-hydroxy-3-methylbut-2-enyl diphosphate. His-124 contacts dimethylallyl diphosphate. His-124 is an isopentenyl diphosphate binding site. The Proton donor role is filled by Glu-126. Thr-169 is a (2E)-4-hydroxy-3-methylbut-2-enyl diphosphate binding site. Position 199 (Cys-199) interacts with [4Fe-4S] cluster. Ser-227, Ser-228, Asn-229, and Ser-271 together coordinate (2E)-4-hydroxy-3-methylbut-2-enyl diphosphate. Ser-227, Ser-228, Asn-229, and Ser-271 together coordinate dimethylallyl diphosphate. The isopentenyl diphosphate site is built by Ser-227, Ser-228, Asn-229, and Ser-271.

This sequence belongs to the IspH family. [4Fe-4S] cluster is required as a cofactor.

It catalyses the reaction isopentenyl diphosphate + 2 oxidized [2Fe-2S]-[ferredoxin] + H2O = (2E)-4-hydroxy-3-methylbut-2-enyl diphosphate + 2 reduced [2Fe-2S]-[ferredoxin] + 2 H(+). The enzyme catalyses dimethylallyl diphosphate + 2 oxidized [2Fe-2S]-[ferredoxin] + H2O = (2E)-4-hydroxy-3-methylbut-2-enyl diphosphate + 2 reduced [2Fe-2S]-[ferredoxin] + 2 H(+). It functions in the pathway isoprenoid biosynthesis; dimethylallyl diphosphate biosynthesis; dimethylallyl diphosphate from (2E)-4-hydroxy-3-methylbutenyl diphosphate: step 1/1. Its pathway is isoprenoid biosynthesis; isopentenyl diphosphate biosynthesis via DXP pathway; isopentenyl diphosphate from 1-deoxy-D-xylulose 5-phosphate: step 6/6. Its function is as follows. Catalyzes the conversion of 1-hydroxy-2-methyl-2-(E)-butenyl 4-diphosphate (HMBPP) into a mixture of isopentenyl diphosphate (IPP) and dimethylallyl diphosphate (DMAPP). Acts in the terminal step of the DOXP/MEP pathway for isoprenoid precursor biosynthesis. This is 4-hydroxy-3-methylbut-2-enyl diphosphate reductase from Vibrio parahaemolyticus serotype O3:K6 (strain RIMD 2210633).